The chain runs to 323 residues: Penicillopepsin-1 (323 aa).

Serine 3 is a glycosylation site (O-linked (Man...) serine). Threonine 7 is a glycosylation site (O-linked (Man...) threonine). The 304-residue stretch at tyrosine 17 to alanine 320 folds into the Peptidase A1 domain. Residues aspartate 33 and aspartate 213 contribute to the active site. Cysteine 249 and cysteine 283 are disulfide-bonded.

Belongs to the peptidase A1 family. In terms of assembly, monomer.

Its subcellular location is the secreted. The catalysed reaction is Hydrolysis of proteins with broad specificity similar to that of pepsin A, preferring hydrophobic residues at P1 and P1', but also cleaving 20-Gly-|-Glu-21 in the B chain of insulin. Clots milk, and activates trypsinogen.. In terms of biological role, secreted aspartic endopeptidase that allows assimilation of proteinaceous substrates. The scissile peptide bond is attacked by a nucleophilic water molecule activated by two aspartic residues in the active site. Shows a broad primary substrate specificity. Favors hydrophobic residues at the P1 and P1' positions, but can also activate trypsinogen and hydrolyze the B chain of insulin between positions 'Gly-20' and 'Glu-21'. This is Penicillopepsin-1 from Penicillium janthinellum (Penicillium vitale).